Consider the following 443-residue polypeptide: C4-dicarboxylate transport protein (443 aa).

The next 10 membrane-spanning stretches (helical) occupy residues 10-30 (SLYF…HFYP), 46-66 (LIKM…IAGM), 78-98 (YALL…LIVV), 130-150 (SIVG…FANG), 152-172 (ILQV…LGAY), 199-219 (PLGA…GSLV), 224-244 (LMIC…GAIC), 291-311 (VVGL…SIYL), 332-352 (ITLL…TGSG), and 354-374 (IVLA…LALI). Residues 415-443 (ELASGGRPITDTRETDDLGVAEGPAPSIK) are disordered.

This sequence belongs to the dicarboxylate/amino acid:cation symporter (DAACS) (TC 2.A.23) family.

Its subcellular location is the cell inner membrane. In terms of biological role, responsible for the transport of dicarboxylates such as succinate, fumarate, and malate from the periplasm across the membrane. This Pseudomonas fluorescens (strain ATCC BAA-477 / NRRL B-23932 / Pf-5) protein is C4-dicarboxylate transport protein.